The chain runs to 112 residues: T cell receptor alpha variable 13-1 (112 aa).

An N-terminal signal peptide occupies residues 1–20 (MTSIRAVFIFLWLQLDLVNG). The 92-residue stretch at 21-112 (ENVEQHPSTL…DSAVYFCAAS (92 aa)) folds into the Ig-like domain. A disulfide bridge links Cys42 with Cys109. N-linked (GlcNAc...) asparagine glycosylation occurs at Asn86.

Alpha-beta TR is a heterodimer composed of an alpha and beta chain; disulfide-linked. The alpha-beta TR is associated with the transmembrane signaling CD3 coreceptor proteins to form the TR-CD3 (TcR or TCR). The assembly of alpha-beta TR heterodimers with CD3 occurs in the endoplasmic reticulum where a single alpha-beta TR heterodimer associates with one CD3D-CD3E heterodimer, one CD3G-CD3E heterodimer and one CD247 homodimer forming a stable octameric structure. CD3D-CD3E and CD3G-CD3E heterodimers preferentially associate with TR alpha and TR beta chains, respectively. The association of the CD247 homodimer is the last step of TcR assembly in the endoplasmic reticulum and is required for transport to the cell surface.

It localises to the cell membrane. Functionally, v region of the variable domain of T cell receptor (TR) alpha chain that participates in the antigen recognition. Alpha-beta T cell receptors are antigen specific receptors which are essential to the immune response and are present on the cell surface of T lymphocytes. Recognize peptide-major histocompatibility (MH) (pMH) complexes that are displayed by antigen presenting cells (APC), a prerequisite for efficient T cell adaptive immunity against pathogens. Binding of alpha-beta TR to pMH complex initiates TR-CD3 clustering on the cell surface and intracellular activation of LCK that phosphorylates the ITAM motifs of CD3G, CD3D, CD3E and CD247 enabling the recruitment of ZAP70. In turn ZAP70 phosphorylates LAT, which recruits numerous signaling molecules to form the LAT signalosome. The LAT signalosome propagates signal branching to three major signaling pathways, the calcium, the mitogen-activated protein kinase (MAPK) kinase and the nuclear factor NF-kappa-B (NF-kB) pathways, leading to the mobilization of transcription factors that are critical for gene expression and essential for T cell growth and differentiation. The T cell repertoire is generated in the thymus, by V-(D)-J rearrangement. This repertoire is then shaped by intrathymic selection events to generate a peripheral T cell pool of self-MH restricted, non-autoaggressive T cells. Post-thymic interaction of alpha-beta TR with the pMH complexes shapes TR structural and functional avidity. The chain is T cell receptor alpha variable 13-1 from Homo sapiens (Human).